We begin with the raw amino-acid sequence, 210 residues long: Isochorismatase domain-containing protein 2B (210 aa).

Lys178 carries the N6-succinyllysine modification.

It belongs to the isochorismatase family. In terms of assembly, interacts with CDKN2A. In terms of tissue distribution, ubiquitous. Expressed predominantly in uterus, stomach and urinary tract.

Its subcellular location is the cytoplasm. The protein resides in the nucleus. The polypeptide is Isochorismatase domain-containing protein 2B (Isoc2b) (Mus musculus (Mouse)).